A 485-amino-acid polypeptide reads, in one-letter code: Subtilisin-like protease 1 (485 aa).

Residues M1–A19 form the signal peptide. Positions G20 to H116 are excised as a propeptide. The 83-residue stretch at S34–H116 folds into the Inhibitor I9 domain. The region spanning S126–K400 is the Peptidase S8 domain. Catalysis depends on charge relay system residues D158 and H190. N-linked (GlcNAc...) asparagine glycosylation is present at N251. S345 (charge relay system) is an active-site residue. Residues G377–I394 show a composition bias toward polar residues. The interval G377–N462 is disordered. Residues P409–P418 show a composition bias toward pro residues. The segment covering S419–Q428 has biased composition (low complexity). Pro residues predominate over residues P433–P455.

Belongs to the peptidase S8 family.

The protein resides in the secreted. Secreted subtilisin-like serine protease with keratinolytic activity that contributes to pathogenicity. The chain is Subtilisin-like protease 1 (SUB1) from Arthroderma otae (strain ATCC MYA-4605 / CBS 113480) (Microsporum canis).